Consider the following 347-residue polypeptide: Protein RecA (347 aa).

67-74 (GPESSGKT) lines the ATP pocket.

Belongs to the RecA family.

It is found in the cytoplasm. Functionally, can catalyze the hydrolysis of ATP in the presence of single-stranded DNA, the ATP-dependent uptake of single-stranded DNA by duplex DNA, and the ATP-dependent hybridization of homologous single-stranded DNAs. It interacts with LexA causing its activation and leading to its autocatalytic cleavage. The sequence is that of Protein RecA from Sulfurovum sp. (strain NBC37-1).